The sequence spans 116 residues: Glycine-rich protein 3 short isoform (116 aa).

A signal peptide spans 1–24; the sequence is MASKTLLLLGLFAFLFIVSEMAAA. The disordered stretch occupies residues 27 to 83; that stretch reads VKSESEETVKPEQHGGGFGDNGGGRYQGGGGHGGHGGGGYQGGGGRYQGGGGRQGGG. Basic and acidic residues predominate over residues 29–39; the sequence is SESEETVKPEQ. Gly residues predominate over residues 40 to 83; that stretch reads HGGGFGDNGGGRYQGGGGHGGHGGGGYQGGGGRYQGGGGRQGGG. Tandem repeats lie at residues 54 to 59, 62 to 67, 68 to 73, 75 to 80, and 81 to 86. The segment at 54–86 is 5 X 6 AA tandem repeats of G-G-G-G-[HYRS]-[GYQ]; the sequence is GGGGHGGHGGGGYQGGGGRYQGGGGRQGGGGSY.

It belongs to the GRP family. Interacts with WAK1 (via the extracellular domain). Component of a 500 kDa complex, composed of GRP3 or GRP3-S, WAK1 and KAPP.

The protein resides in the secreted. Its subcellular location is the extracellular space. It is found in the extracellular matrix. In terms of biological role, regulates the function of the receptor protein kinase WAK1. This chain is Glycine-rich protein 3 short isoform (GRP3S), found in Arabidopsis thaliana (Mouse-ear cress).